The following is a 162-amino-acid chain: Troponin C, skeletal muscle (162 aa).

4 EF-hand domains span residues 17 to 52 (EMIA…LGQN), 53 to 88 (PTKE…QMKE), 93 to 128 (KSEE…TGEH), and 129 to 162 (VTEE…EGVQ). Positions 30, 32, 36, 41, 66, 68, 70, 72, 77, 106, 108, 110, 117, 142, 144, 146, 148, and 153 each coordinate Ca(2+).

Belongs to the troponin C family.

In terms of biological role, troponin is the central regulatory protein of striated muscle contraction. Tn consists of three components: Tn-I which is the inhibitor of actomyosin ATPase, Tn-T which contains the binding site for tropomyosin and Tn-C. The binding of calcium to Tn-C abolishes the inhibitory action of Tn on actin filaments. The chain is Troponin C, skeletal muscle (TNNC2) from Meleagris gallopavo (Wild turkey).